Reading from the N-terminus, the 565-residue chain is Proline--tRNA ligase (565 aa).

This sequence belongs to the class-II aminoacyl-tRNA synthetase family. ProS type 1 subfamily. In terms of assembly, homodimer.

The protein localises to the cytoplasm. The catalysed reaction is tRNA(Pro) + L-proline + ATP = L-prolyl-tRNA(Pro) + AMP + diphosphate. In terms of biological role, catalyzes the attachment of proline to tRNA(Pro) in a two-step reaction: proline is first activated by ATP to form Pro-AMP and then transferred to the acceptor end of tRNA(Pro). As ProRS can inadvertently accommodate and process non-cognate amino acids such as alanine and cysteine, to avoid such errors it has two additional distinct editing activities against alanine. One activity is designated as 'pretransfer' editing and involves the tRNA(Pro)-independent hydrolysis of activated Ala-AMP. The other activity is designated 'posttransfer' editing and involves deacylation of mischarged Ala-tRNA(Pro). The misacylated Cys-tRNA(Pro) is not edited by ProRS. The protein is Proline--tRNA ligase of Lactobacillus gasseri (strain ATCC 33323 / DSM 20243 / BCRC 14619 / CIP 102991 / JCM 1131 / KCTC 3163 / NCIMB 11718 / NCTC 13722 / AM63).